The chain runs to 188 residues: Elongation factor P (188 aa).

This sequence belongs to the elongation factor P family.

Its subcellular location is the cytoplasm. Its pathway is protein biosynthesis; polypeptide chain elongation. In terms of biological role, involved in peptide bond synthesis. Stimulates efficient translation and peptide-bond synthesis on native or reconstituted 70S ribosomes in vitro. Probably functions indirectly by altering the affinity of the ribosome for aminoacyl-tRNA, thus increasing their reactivity as acceptors for peptidyl transferase. This chain is Elongation factor P, found in Gluconobacter oxydans (strain 621H) (Gluconobacter suboxydans).